The primary structure comprises 808 residues: Quinoprotein glucose dehydrogenase (808 aa).

A signal peptide spans 1–33 (MSTTSRPGLWALITAAVFALCGAILTVGGAWVA). A run of 4 helical transmembrane segments spans residues 35 to 54 (IGGP…TAFL), 59 to 76 (NPAA…TVIW), 94 to 108 (IVII…PFVS), and 123 to 138 (GAVG…SLFT). Catalysis depends on D470, which acts as the Proton acceptor. A disordered region spans residues 514–545 (VPAPETPVPQGAAPGDHTSPTQPMSQLTLRPK). Over residues 531–541 (TSPTQPMSQLT) the composition is skewed to polar residues.

It belongs to the bacterial PQQ dehydrogenase family. It depends on pyrroloquinoline quinone as a cofactor.

The protein localises to the cell inner membrane. It carries out the reaction a ubiquinone + D-glucose = D-glucono-1,5-lactone + a ubiquinol. The chain is Quinoprotein glucose dehydrogenase (gdh) from Gluconobacter oxydans (strain 621H) (Gluconobacter suboxydans).